A 147-amino-acid chain; its full sequence is Thyrotropin subunit beta (147 aa).

The first 20 residues, 1–20, serve as a signal peptide directing secretion; the sequence is MELSVAMYGLLCLLFSQAVP. Disulfide bonds link Cys22-Cys72, Cys36-Cys87, Cys39-Cys127, Cys47-Cys103, Cys51-Cys105, and Cys108-Cys115. Residue Asn43 is glycosylated (N-linked (GlcNAc...) asparagine).

The protein belongs to the glycoprotein hormones subunit beta family. As to quaternary structure, heterodimer of a common alpha chain and a unique beta chain which confers biological specificity to thyrotropin, lutropin, follitropin and gonadotropin. Pituitary gland. Higher levels seen in immature fishes than the mature fishes.

Its subcellular location is the secreted. Functionally, indispensable for the control of thyroid structure and metabolism. May play some role in the biological processes of the immature fishes. The sequence is that of Thyrotropin subunit beta (tshb) from Oncorhynchus mykiss (Rainbow trout).